A 295-amino-acid polypeptide reads, in one-letter code: Ankyrin repeat and SOCS box protein 17 (295 aa).

Residues 146 to 176 (SGITPLLYVAQTRQSNILKILLQYGILEREK) form an ANK repeat. Residues 232 to 295 (LGRRPIISNW…RLQKYLNLES (64 aa)) form the SOCS box domain.

It belongs to the ankyrin SOCS box (ASB) family.

The protein operates within protein modification; protein ubiquitination. Functionally, may be a substrate-recognition component of a SCF-like ECS (Elongin-Cullin-SOCS-box protein) E3 ubiquitin-protein ligase complex which mediates the ubiquitination and subsequent proteasomal degradation of target proteins. The sequence is that of Ankyrin repeat and SOCS box protein 17 (ASB17) from Canis lupus familiaris (Dog).